The chain runs to 412 residues: Arginine biosynthesis bifunctional protein ArgJ (412 aa).

Positions 155, 181, 192, 279, 407, and 412 each coordinate substrate. The active-site Nucleophile is the threonine 192.

It belongs to the ArgJ family. In terms of assembly, heterotetramer of two alpha and two beta chains.

It localises to the cytoplasm. It carries out the reaction N(2)-acetyl-L-ornithine + L-glutamate = N-acetyl-L-glutamate + L-ornithine. The enzyme catalyses L-glutamate + acetyl-CoA = N-acetyl-L-glutamate + CoA + H(+). It participates in amino-acid biosynthesis; L-arginine biosynthesis; L-ornithine and N-acetyl-L-glutamate from L-glutamate and N(2)-acetyl-L-ornithine (cyclic): step 1/1. Its pathway is amino-acid biosynthesis; L-arginine biosynthesis; N(2)-acetyl-L-ornithine from L-glutamate: step 1/4. Its function is as follows. Catalyzes two activities which are involved in the cyclic version of arginine biosynthesis: the synthesis of N-acetylglutamate from glutamate and acetyl-CoA as the acetyl donor, and of ornithine by transacetylation between N(2)-acetylornithine and glutamate. The protein is Arginine biosynthesis bifunctional protein ArgJ of Aromatoleum aromaticum (strain DSM 19018 / LMG 30748 / EbN1) (Azoarcus sp. (strain EbN1)).